Consider the following 1429-residue polypeptide: Autophagy-related protein 11 (1429 aa).

Positions 71–99 are disordered; the sequence is TQRSQPGASSPPLSELPLPRYNAHTPPNS. A compositionally biased stretch (low complexity) spans 80 to 89; sequence SPPLSELPLP. Coiled coils occupy residues 143–173, 553–590, 632–815, and 851–989; these read VMLR…KEWS, DDLL…QTQA, LETL…LEDI, and EGDM…RLES. A disordered region spans residues 1024 to 1061; sequence DGTMHIQRTPRSERSLATTANPNDSDPSSSLRRSSTLN. A compositionally biased stretch (low complexity) spans 1042–1061; it reads TANPNDSDPSSSLRRSSTLN. Residues 1105-1143 are a coiled coil; the sequence is ADAVYRRVKDVEHMARKLQREARAYREKAHSFQKEAHDK. The span at 1209–1229 shows a compositional bias: basic and acidic residues; the sequence is SKSLQHDQAGETRKDGARGET. Disordered regions lie at residues 1209–1241 and 1336–1429; these read SKSL…DNPF and SSRG…LIGP. The segment covering 1230–1239 has biased composition (acidic residues); it reads ESLDDDENDN. 2 stretches are compositionally biased toward polar residues: residues 1345–1372 and 1383–1393; these read ASET…QHMS and QETPQQTNSIS.

The protein belongs to the ATG11 family. In terms of assembly, homodimer.

The protein localises to the preautophagosomal structure membrane. It is found in the vacuole membrane. Functionally, involved in cytoplasm to vacuole transport (Cvt), pexophagy, mitophagy and nucleophagy. Recruits mitochondria for their selective degradation via autophagy (mitophagy) during starvation. Works as scaffold proteins that recruit ATG proteins to the pre-autophagosome (PAS), the site of vesicle/autophagosome formation. Required for the Cvt vesicles completion. The protein is Autophagy-related protein 11 (apg-8) of Neurospora crassa (strain ATCC 24698 / 74-OR23-1A / CBS 708.71 / DSM 1257 / FGSC 987).